A 162-amino-acid polypeptide reads, in one-letter code: Type IV major fimbrial protein FimA (162 aa).

The propeptide at 1-7 (MKSLQKG) is leader sequence. At Phe-8 the chain carries N-methylphenylalanine. Residues 8–28 (FTLIELMIVVAIIGILAAFAI) form a helical membrane-spanning segment. Cys-63 and Cys-106 are joined by a disulfide.

It belongs to the N-Me-Phe pilin family.

It localises to the fimbrium. Its subcellular location is the membrane. Functionally, major component of the type IV fimbriae that plays an essential role in twitching motility, natural transformation, and protease secretion. This is Type IV major fimbrial protein FimA (fimA) from Dichelobacter nodosus (strain VCS1703A).